We begin with the raw amino-acid sequence, 427 residues long: Arginine biosynthesis bifunctional protein ArgJ (427 aa).

Substrate contacts are provided by T174, K200, T211, E291, N422, and T427. T211 acts as the Nucleophile in catalysis.

It belongs to the ArgJ family. Heterotetramer of two alpha and two beta chains.

Its subcellular location is the cytoplasm. It carries out the reaction N(2)-acetyl-L-ornithine + L-glutamate = N-acetyl-L-glutamate + L-ornithine. The enzyme catalyses L-glutamate + acetyl-CoA = N-acetyl-L-glutamate + CoA + H(+). It participates in amino-acid biosynthesis; L-arginine biosynthesis; L-ornithine and N-acetyl-L-glutamate from L-glutamate and N(2)-acetyl-L-ornithine (cyclic): step 1/1. Its pathway is amino-acid biosynthesis; L-arginine biosynthesis; N(2)-acetyl-L-ornithine from L-glutamate: step 1/4. In terms of biological role, catalyzes two activities which are involved in the cyclic version of arginine biosynthesis: the synthesis of N-acetylglutamate from glutamate and acetyl-CoA as the acetyl donor, and of ornithine by transacetylation between N(2)-acetylornithine and glutamate. The sequence is that of Arginine biosynthesis bifunctional protein ArgJ from Prochlorococcus marinus (strain MIT 9313).